The following is a 384-amino-acid chain: Protein cutoff (384 aa).

The protein belongs to the DXO/Dom3Z family. In terms of assembly, component of the Rhino-Deadlock-Cutoff (RDC) complex, composed of rhi/rhino, del/deadlock and cuff/cutoff. Interacts with rhi/rhino; this interaction is indirect and is mediated by del/deadlock. Interacts with del/deadlock (via C-terminal); this interaction is direct. Interacts with Rat1.

The protein localises to the cytoplasm. It is found in the nucleus. It localises to the chromosome. In terms of biological role, involved in the piRNA pathway in germline tissues. Part of the Rhino-Deadlock-Cutoff (RDC) complex that stimulates piRNA biogenesis from chromatin regions corresponding to dual-strand, but not single-stranded, piRNA clusters. Promotes transcription of long piRNA precursors by preventing termination at canonical poly(A) sites. As part of the RDC complex, is recruited to chromatin enriched in histone modification H3K9me3 and might contribute to complex interaction by binding nascent transcript nucleic acid chains. Associates with chromatin upon exposure to homologous piRNA. Suppresses cleavage at canonical poly(A) sites by blocking recruitment of the cleavage and polyadenylation specificity factor (CPSF) complex and prevents transcriptional termination by RNA polymerase II, facilitating transcriptional read-through. As part of the RDC complex, involved in suppression of splicing. Catalytically inactive, lacking 5'-3' exonuclease and pyrophosphohydrolase activities. Stabilizes uncapped piRNA precursors in the nucleus, probably by sequestering or blocking the exonuclease activity of Rat1. May also be involved in siRNA biogenesis from dual-strand piRNA clusters. The polypeptide is Protein cutoff (cuff) (Drosophila melanogaster (Fruit fly)).